The sequence spans 240 residues: Ubiquinone biosynthesis O-methyltransferase (240 aa).

R44, G64, D85, and M129 together coordinate S-adenosyl-L-methionine.

The protein belongs to the methyltransferase superfamily. UbiG/COQ3 family.

It carries out the reaction a 3-demethylubiquinol + S-adenosyl-L-methionine = a ubiquinol + S-adenosyl-L-homocysteine + H(+). It catalyses the reaction a 3-(all-trans-polyprenyl)benzene-1,2-diol + S-adenosyl-L-methionine = a 2-methoxy-6-(all-trans-polyprenyl)phenol + S-adenosyl-L-homocysteine + H(+). It participates in cofactor biosynthesis; ubiquinone biosynthesis. Its function is as follows. O-methyltransferase that catalyzes the 2 O-methylation steps in the ubiquinone biosynthetic pathway. In Escherichia coli O6:H1 (strain CFT073 / ATCC 700928 / UPEC), this protein is Ubiquinone biosynthesis O-methyltransferase.